Reading from the N-terminus, the 194-residue chain is Surfactant protein C (194 aa).

The interval 1-21 (MDMGSKEVLMESPPDYSTGPR) is disordered. Positions 1–23 (MDMGSKEVLMESPPDYSTGPRSQ) are excised as a propeptide. S-palmitoyl cysteine attachment occurs at residues Cys-28 and Cys-29. Residues 59–194 (HMSQKHTEMV…LCGELPLYYI (136 aa)) constitute a propeptide that is removed on maturation. The 100-residue stretch at 95 to 194 (FSIGSTGIVL…LCGELPLYYI (100 aa)) folds into the BRICHOS domain. Cys-122 and Cys-186 are disulfide-bonded. Positions 149-170 (SSTPTSKLGQEEGHSAGSDSDS) are disordered.

It is found in the secreted. Its subcellular location is the extracellular space. It localises to the surface film. In terms of biological role, pulmonary surfactant associated proteins promote alveolar stability by lowering the surface tension at the air-liquid interface in the peripheral air spaces. The protein is Surfactant protein C of Rattus norvegicus (Rat).